The following is a 183-amino-acid chain: MTAQGGLVANRGRRFKWAIELSGPGGGSRGRSDRGSGQGDSLYPVGYLDKQVPDTSVQETDRILVEKRCWDIALGPLKQIPMNLFIMYMAGNTISIFPTMMVCMMAWRPIQALMAISATFKMLESSSQKFLQGLVYLIGNLMGLALAVYKCQSMGLLPTHASDWLAFIEPPERMEFSGGGLLL.

The residue at position 2 (T2) is an N-acetylthreonine. Residues 2-66 lie on the Cytoplasmic side of the membrane; it reads TAQGGLVANR…VQETDRILVE (65 aa). A disordered region spans residues 20-39; it reads ELSGPGGGSRGRSDRGSGQG. S36 is subject to Phosphoserine. The chain crosses the membrane as a helical span at residues 67 to 87; that stretch reads KRCWDIALGPLKQIPMNLFIM. The Lumenal segment spans residues 88 to 98; it reads YMAGNTISIFP. Residues 99 to 120 form a helical membrane-spanning segment; that stretch reads TMMVCMMAWRPIQALMAISATF. Over 121–127 the chain is Cytoplasmic; the sequence is KMLESSS. Residues 128–148 form a helical membrane-spanning segment; the sequence is QKFLQGLVYLIGNLMGLALAV. Over 149–183 the chain is Lumenal; sequence YKCQSMGLLPTHASDWLAFIEPPERMEFSGGGLLL.

The protein belongs to the EMC4 family. Component of the ER membrane protein complex (EMC). In terms of tissue distribution, isoform 1 is expressed in brain and heart. Isoform 2 is expressed in heart.

It is found in the endoplasmic reticulum membrane. Its function is as follows. Part of the endoplasmic reticulum membrane protein complex (EMC) that enables the energy-independent insertion into endoplasmic reticulum membranes of newly synthesized membrane proteins. Preferentially accommodates proteins with transmembrane domains that are weakly hydrophobic or contain destabilizing features such as charged and aromatic residues. Involved in the cotranslational insertion of multi-pass membrane proteins in which stop-transfer membrane-anchor sequences become ER membrane spanning helices. It is also required for the post-translational insertion of tail-anchored/TA proteins in endoplasmic reticulum membranes. By mediating the proper cotranslational insertion of N-terminal transmembrane domains in an N-exo topology, with translocated N-terminus in the lumen of the ER, controls the topology of multi-pass membrane proteins like the G protein-coupled receptors. By regulating the insertion of various proteins in membranes, it is indirectly involved in many cellular processes. The polypeptide is ER membrane protein complex subunit 4 (EMC4) (Homo sapiens (Human)).